We begin with the raw amino-acid sequence, 546 residues long: Amidophosphoribosyltransferase (546 aa).

Positions M1–V26 are enriched in low complexity. The tract at residues M1–E39 is disordered. A propeptide spanning residues M1 to E53 is cleaved from the precursor. Catalysis depends on C54, which acts as the Nucleophile. Residues C54–S302 enclose the Glutamine amidotransferase type-2 domain. At S113 the chain carries Phosphoserine. T114 carries the post-translational modification Phosphothreonine. Phosphoserine is present on S120. Residue C321 coordinates [4Fe-4S] cluster. Residues S368, D430, and D431 each contribute to the Mg(2+) site. 3 residues coordinate [4Fe-4S] cluster: C467, C528, and C531.

In the C-terminal section; belongs to the purine/pyrimidine phosphoribosyltransferase family. Requires Mg(2+) as cofactor. [4Fe-4S] cluster serves as cofactor.

It catalyses the reaction 5-phospho-beta-D-ribosylamine + L-glutamate + diphosphate = 5-phospho-alpha-D-ribose 1-diphosphate + L-glutamine + H2O. The protein operates within purine metabolism; IMP biosynthesis via de novo pathway; N(1)-(5-phospho-D-ribosyl)glycinamide from 5-phospho-alpha-D-ribose 1-diphosphate: step 1/2. Functionally, involved in the first step (and regulatory point) of the de novo biosynthesis of purine nucleotides, where it catalyzes the transfer of glutamine amide to 5-phospho-alpha-D-ribose 1-diphosphate. The chain is Amidophosphoribosyltransferase (Prat) from Drosophila melanogaster (Fruit fly).